A 451-amino-acid chain; its full sequence is Uronate isomerase (451 aa).

This sequence belongs to the metallo-dependent hydrolases superfamily. Uronate isomerase family. Homotrimer.

It catalyses the reaction D-glucuronate = D-fructuronate. It carries out the reaction aldehydo-D-galacturonate = keto-D-tagaturonate. It functions in the pathway carbohydrate metabolism; pentose and glucuronate interconversion. This is Uronate isomerase from Thermotoga maritima (strain ATCC 43589 / DSM 3109 / JCM 10099 / NBRC 100826 / MSB8).